The chain runs to 239 residues: Large ribosomal subunit protein uL1 (239 aa).

This sequence belongs to the universal ribosomal protein uL1 family. In terms of assembly, part of the 50S ribosomal subunit.

In terms of biological role, binds directly to 23S rRNA. The L1 stalk is quite mobile in the ribosome, and is involved in E site tRNA release. Functionally, protein L1 is also a translational repressor protein, it controls the translation of the L11 operon by binding to its mRNA. The polypeptide is Large ribosomal subunit protein uL1 (Rickettsia bellii (strain OSU 85-389)).